The following is an 87-amino-acid chain: Small ribosomal subunit protein uS17 (87 aa).

The protein belongs to the universal ribosomal protein uS17 family. Part of the 30S ribosomal subunit.

In terms of biological role, one of the primary rRNA binding proteins, it binds specifically to the 5'-end of 16S ribosomal RNA. The protein is Small ribosomal subunit protein uS17 of Oceanobacillus iheyensis (strain DSM 14371 / CIP 107618 / JCM 11309 / KCTC 3954 / HTE831).